The sequence spans 284 residues: Flavin-dependent thymidylate synthase (284 aa).

Residues 27-237 (GFIRVVDYMG…PLAYNAFVEY (211 aa)) enclose the ThyX domain. FAD contacts are provided by residues Thr73, 96-98 (RHR), and Glu104. Residues 93–96 (QWIR) and 104–108 (EYSAR) each bind dUMP. Positions 96–106 (RHRTANVNEYS) match the ThyX motif motif. Residues 122 to 142 (EQVAKQSDNNKQGSGEAFDPD) form a disordered region. Positions 125–134 (AKQSDNNKQG) are enriched in polar residues. Position 176 (Arg176) interacts with dUMP. FAD is bound by residues 192–194 (DLH) and His198. Position 203 (Arg203) interacts with dUMP. Arg203 acts as the Involved in ionization of N3 of dUMP, leading to its activation in catalysis.

This sequence belongs to the thymidylate synthase ThyX family. In terms of assembly, homotetramer. Requires FAD as cofactor.

It catalyses the reaction dUMP + (6R)-5,10-methylene-5,6,7,8-tetrahydrofolate + NADPH + H(+) = dTMP + (6S)-5,6,7,8-tetrahydrofolate + NADP(+). The protein operates within pyrimidine metabolism; dTTP biosynthesis. Functionally, catalyzes the reductive methylation of 2'-deoxyuridine-5'-monophosphate (dUMP) to 2'-deoxythymidine-5'-monophosphate (dTMP) while utilizing 5,10-methylenetetrahydrofolate (mTHF) as the methyl donor, and NADPH and FADH(2) as the reductant. This is Flavin-dependent thymidylate synthase from Wolbachia pipientis wMel.